A 441-amino-acid polypeptide reads, in one-letter code: Deoxyguanosinetriphosphate triphosphohydrolase-like protein 1 (441 aa).

Positions 62–255 (RLTHSLEAAQ…MELADDIAYG (194 aa)) constitute an HD domain.

It belongs to the dGTPase family. Type 2 subfamily.

This Vibrio cholerae serotype O1 (strain ATCC 39315 / El Tor Inaba N16961) protein is Deoxyguanosinetriphosphate triphosphohydrolase-like protein 1.